A 350-amino-acid polypeptide reads, in one-letter code: Beta-ketodecanoyl-[acyl-carrier-protein] synthase (350 aa).

C133 is an active-site residue.

Belongs to the thiolase-like superfamily. Beta-ketoacyl-ACP synthases family.

The catalysed reaction is octanoyl-CoA + malonyl-[ACP] + H(+) = 3-oxodecanoyl-[ACP] + CO2 + CoA. Its pathway is lipid metabolism; fatty acid biosynthesis. Its function is as follows. Catalyzes the condensation of octanoyl-CoA, obtained from exogenously supplied fatty acids via beta-oxidation, with malonyl-[acyl-carrier protein], forming 3-oxodecanoyl-[acyl-carrier protein], an intermediate of the fatty acid elongation cycle that can then be extended to supply all of the cellular fatty acid needs. The enzyme thereby shunts fatty acid degradation intermediates from the beta-oxidation pathway into de novo fatty acid biosynthesis. The sequence is that of Beta-ketodecanoyl-[acyl-carrier-protein] synthase from Pseudomonas aeruginosa (strain ATCC 15692 / DSM 22644 / CIP 104116 / JCM 14847 / LMG 12228 / 1C / PRS 101 / PAO1).